A 167-amino-acid polypeptide reads, in one-letter code: Translationally-controlled tumor protein homolog (167 aa).

Residues 1 to 167 (MLIFEDVISG…WKHGVKENKI (167 aa)) form the TCTP domain.

It belongs to the TCTP family.

The protein localises to the cytoplasm. It localises to the cytoskeleton. Involved in protein synthesis. Involved in microtubule stabilization. The polypeptide is Translationally-controlled tumor protein homolog (TMA19) (Candida albicans (strain SC5314 / ATCC MYA-2876) (Yeast)).